Consider the following 498-residue polypeptide: Transcription factor kayak (498 aa).

Positions 108-127 are enriched in polar residues; sequence ASLGQGSESEDSNASYNDTQ. Disordered stretches follow at residues 108–144 and 177–234; these read ASLGQGSESEDSNASYNDTQMNEEQDTTDTSSAHTDS and GSAS…KRRV. Composition is skewed to low complexity over residues 135 to 144 and 177 to 191; these read TDTSSAHTDS and GSASVGSSNANTSNT. A bZIP domain is found at 212–275; that stretch reads EQKRAVRRER…KQLEYLLATH (64 aa). Positions 214-233 are basic motif; it reads KRAVRRERNKQAAARCRKRR. The interval 240–247 is leucine-zipper; sequence LTEEVEQL. The span at 304–325 shows a compositional bias: low complexity; it reads AGSSGSGASSHHNHNSNDSSNG. Disordered stretches follow at residues 304–345 and 465–498; these read AGSS…SPLD and TPVSGPLVPNSSSTNKHPLELPTPTAEPSKLVSL. The segment covering 333–343 has biased composition (polar residues); the sequence is TLNSTGRSNSP. Residue Ser-342 is modified to Phosphoserine.

This sequence belongs to the bZIP family. Fos subfamily. Homodimer. Heterodimer with Jra. The kay-Jra heterodimer binds more stably to the AP-1 site than either of the two proteins alone.

The protein localises to the nucleus. In terms of biological role, developmentally regulated transcription factor AP-1 binds and recognizes the enhancer DNA sequence: 5'-TGA[CG]TCA-3'. May play a role in the function or determination of a particular subset of cells in the developing embryo. It is able to carry out its function either independently of or in conjunction with Jra. In Drosophila simulans (Fruit fly), this protein is Transcription factor kayak.